Consider the following 222-residue polypeptide: Phosphoglycolate phosphatase (222 aa).

Aspartate 12 functions as the Nucleophile in the catalytic mechanism. Mg(2+) is bound by residues aspartate 12, aspartate 14, and aspartate 175.

This sequence belongs to the HAD-like hydrolase superfamily. CbbY/CbbZ/Gph/YieH family. It depends on Mg(2+) as a cofactor.

The catalysed reaction is 2-phosphoglycolate + H2O = glycolate + phosphate. It participates in organic acid metabolism; glycolate biosynthesis; glycolate from 2-phosphoglycolate: step 1/1. In terms of biological role, specifically catalyzes the dephosphorylation of 2-phosphoglycolate. Is involved in the dissimilation of the intracellular 2-phosphoglycolate formed during the DNA repair of 3'-phosphoglycolate ends, a major class of DNA lesions induced by oxidative stress. The chain is Phosphoglycolate phosphatase from Chromobacterium violaceum (strain ATCC 12472 / DSM 30191 / JCM 1249 / CCUG 213 / NBRC 12614 / NCIMB 9131 / NCTC 9757 / MK).